The sequence spans 178 residues: ATP-dependent protease subunit HslV (178 aa).

The active site involves Thr-7. Na(+) contacts are provided by Gly-162, Cys-165, and Thr-168.

Belongs to the peptidase T1B family. HslV subfamily. A double ring-shaped homohexamer of HslV is capped on each side by a ring-shaped HslU homohexamer. The assembly of the HslU/HslV complex is dependent on binding of ATP.

The protein resides in the cytoplasm. It carries out the reaction ATP-dependent cleavage of peptide bonds with broad specificity.. Its activity is regulated as follows. Allosterically activated by HslU binding. Its function is as follows. Protease subunit of a proteasome-like degradation complex believed to be a general protein degrading machinery. The sequence is that of ATP-dependent protease subunit HslV from Burkholderia cenocepacia (strain ATCC BAA-245 / DSM 16553 / LMG 16656 / NCTC 13227 / J2315 / CF5610) (Burkholderia cepacia (strain J2315)).